We begin with the raw amino-acid sequence, 261 residues long: Tryptophan synthase alpha chain (261 aa).

Active-site proton acceptor residues include Glu-47 and Asp-58.

Belongs to the TrpA family. As to quaternary structure, tetramer of two alpha and two beta chains.

It carries out the reaction (1S,2R)-1-C-(indol-3-yl)glycerol 3-phosphate + L-serine = D-glyceraldehyde 3-phosphate + L-tryptophan + H2O. It participates in amino-acid biosynthesis; L-tryptophan biosynthesis; L-tryptophan from chorismate: step 5/5. Functionally, the alpha subunit is responsible for the aldol cleavage of indoleglycerol phosphate to indole and glyceraldehyde 3-phosphate. The protein is Tryptophan synthase alpha chain of Neisseria gonorrhoeae (strain ATCC 700825 / FA 1090).